Consider the following 523-residue polypeptide: Metalloprotease TIKI2 (523 aa).

An N-terminal signal peptide occupies residues 1 to 26; that stretch reads MGKTMWARAVFLCFSVGTLLWQEVLT. At 27 to 499 the chain is on the extracellular side; that stretch reads RRIPVDTGQC…HSQSNSSPKC (473 aa). N-linked (GlcNAc...) asparagine glycans are attached at residues asparagine 225, asparagine 234, asparagine 283, and asparagine 341. A helical transmembrane segment spans residues 500–516; that stretch reads LSASPAFLYTLVTLCLI. At 517–523 the chain is on the cytoplasmic side; it reads TTMRTRS.

It belongs to the TIKI family. Requires Mn(2+) as cofactor. Co(2+) serves as cofactor.

The protein localises to the cell membrane. Functionally, metalloprotease that acts as a negative regulator of the Wnt signaling pathway by mediating the cleavage of the N-terminal residues of a subset of Wnt proteins. Following cleavage, Wnt proteins become oxidized and form large disulfide-bond oligomers, leading to their inactivation. Able to cleave wnt8. Required for head formation. The sequence is that of Metalloprotease TIKI2 (trabd2b) from Xenopus tropicalis (Western clawed frog).